The sequence spans 318 residues: Large ribosomal subunit protein uL10 (318 aa).

A Phosphotyrosine modification is found at tyrosine 24. The residue at position 59 (threonine 59) is a Phosphothreonine. A Glycyl lysine isopeptide (Lys-Gly) (interchain with G-Cter in ubiquitin) cross-link involves residue lysine 264. Lysine 298 participates in a covalent cross-link: Glycyl lysine isopeptide (Lys-Gly) (interchain with G-Cter in SUMO1); alternate. Residue lysine 298 forms a Glycyl lysine isopeptide (Lys-Gly) (interchain with G-Cter in SUMO2); alternate linkage. Residues 298-318 (KVEAKEESEESDEDMGFGLFD) form a disordered region. Acidic residues predominate over residues 303 to 312 (EESEESDEDM). Phosphoserine is present on residues serine 305 and serine 308.

It belongs to the universal ribosomal protein uL10 family. As to quaternary structure, P0 forms a pentameric complex by interaction with dimers of P1 and P2. Identified in a IGF2BP1-dependent mRNP granule complex containing untranslated mRNAs. Interacts with APEX1. Interacts with FMR1. Post-translationally, ubiquitinated at Lys-264 by RNF14 and RNF25 in response to ribosome collisions (ribosome stalling).

The protein resides in the nucleus. It localises to the cytoplasm. Ribosomal protein P0 is the functional equivalent of E.coli protein L10. The chain is Large ribosomal subunit protein uL10 (RPLP0) from Sus scrofa (Pig).